A 199-amino-acid chain; its full sequence is Thymidine kinase (199 aa).

ATP is bound by residues 23 to 30 and 95 to 98; these read GSMFSGKT and DEAQ. The active-site Proton acceptor is the Glu-96. Cys-152, Cys-155, Cys-184, and Cys-187 together coordinate Zn(2+).

It belongs to the thymidine kinase family. As to quaternary structure, homotetramer.

It localises to the cytoplasm. The catalysed reaction is thymidine + ATP = dTMP + ADP + H(+). The chain is Thymidine kinase from Bacteroides fragilis (strain YCH46).